Here is an 841-residue protein sequence, read N- to C-terminus: MTQVTVKELAKVVDTPVERLLQQMREAGLPHTAAEQVVTDNEKQALLTHLKSGHKAKVEEPRKITLQRKTTSTLRVAGSKSISVEVRKKKVFVQRSPEEIEAERKREMDERRAVENAARQKAEEEAKRRAEEDARNQPAAGQPASAPAQPVAAAEPVREAPAAAAPAPASAAPSADARKRDEQRRPDKPRADDRNARGGDGDRKNAPHRASVKEKAPAPRVAPRTTDEESDSFRRGGRGKGKLKKRNAHGFQSPTGPVIRDVAIGETITVGELSAQMSVKAAEVIKFMFKMGTPVTINQVLDQETAQLIAEELGHKVTLVSDNALEDSLAESLKFEGESFSRAPVVTVMGHVDHGKTSLLDYIRRAKVAAGEAGGITQHIGAYHVETERGMVTFLDTPGHAAFTAMRARGAKATDIVILVVAADDGVMPQTIEAVQHAVAAGVPLVVAVNKIDKPGADLDRIRSELSVHGVTSEEWGGDTPFVSVSAKMGTGVDELLEAVLLQAEVLELKATPSAPGRGVVVESRLDKGRGPVATVLVQDGTLRQGDMVLVGSNFGRIRAMLDENGKPVKEAGPSIPVEILGLDGTPDAGDEMSVLSDEKKAREVALFRQGKFREVKLARAHAGKLENIFENMGQAEKKTLNIVLKSDVRGSLEALNGALNGLGNDEVQVRVVGGGVGGITESDANLALASNAVLFGFNVRADAGARKIVEQEGLDMRYYNVIYDIIEDVKKALTGMLGSDVRENILGIAEVRDVFRSPKFGAIAGCMVLEGTVYRNRPIRVLREDIVIFEGELESLRRFKDDAADVRAGMECGIGVKSYNDVKVGDKIEVFEKVQVARSL.

The disordered stretch occupies residues 94-255; that stretch reads QRSPEEIEAE…RNAHGFQSPT (162 aa). Basic and acidic residues predominate over residues 96 to 135; the sequence is SPEEIEAERKREMDERRAVENAARQKAEEEAKRRAEEDAR. A compositionally biased stretch (low complexity) spans 136 to 175; that stretch reads NQPAAGQPASAPAQPVAAAEPVREAPAAAAPAPASAAPSA. 2 stretches are compositionally biased toward basic and acidic residues: residues 176–217 and 225–234; these read DARK…EKAP and TTDEESDSFR. Residues 235–248 are compositionally biased toward basic residues; the sequence is RGGRGKGKLKKRNA. The tr-type G domain occupies 341 to 510; it reads SRAPVVTVMG…LLQAEVLELK (170 aa). Residues 350–357 are G1; that stretch reads GHVDHGKT. A GTP-binding site is contributed by 350 to 357; it reads GHVDHGKT. The tract at residues 375-379 is G2; it reads GITQH. Positions 396–399 are G3; the sequence is DTPG. Residues 396–400 and 450–453 each bind GTP; these read DTPGH and NKID. The interval 450 to 453 is G4; that stretch reads NKID. The tract at residues 486–488 is G5; it reads SAK.

The protein belongs to the TRAFAC class translation factor GTPase superfamily. Classic translation factor GTPase family. IF-2 subfamily.

It is found in the cytoplasm. Its function is as follows. One of the essential components for the initiation of protein synthesis. Protects formylmethionyl-tRNA from spontaneous hydrolysis and promotes its binding to the 30S ribosomal subunits. Also involved in the hydrolysis of GTP during the formation of the 70S ribosomal complex. The protein is Translation initiation factor IF-2 of Pseudomonas syringae pv. tomato (strain ATCC BAA-871 / DC3000).